Consider the following 486-residue polypeptide: Histone acetyltransferase type B catalytic subunit DDB_G0274269 (486 aa).

Residues 27–69 (DIEELKNKDNKENKDKENKAHIKDEGEEEEQKEKKEEEEKEDD) are a coiled coil. Basic and acidic residues predominate over residues 33–50 (NKDNKENKDKENKAHIKD). The tract at residues 33 to 78 (NKDNKENKDKENKAHIKDEGEEEEQKEKKEEEEKEDDGGPISFHPT) is disordered. Residues 189–386 (VVFRYHEKLQ…YRISIKKRLY (198 aa)) enclose the N-acetyltransferase domain. Acetyl-CoA contacts are provided by residues 260–262 (YLI) and 267–273 (QRMGHGK). Glu-299 functions as the Proton donor/acceptor in the catalytic mechanism. Residues 392–481 (DSEQIEKIKQ…KNYHKTLSSL (90 aa)) adopt a coiled-coil conformation.

It belongs to the HAT1 family.

The catalysed reaction is L-lysyl-[protein] + acetyl-CoA = N(6)-acetyl-L-lysyl-[protein] + CoA + H(+). This Dictyostelium discoideum (Social amoeba) protein is Histone acetyltransferase type B catalytic subunit DDB_G0274269.